A 480-amino-acid polypeptide reads, in one-letter code: Proline--tRNA ligase (480 aa).

The protein belongs to the class-II aminoacyl-tRNA synthetase family. ProS type 3 subfamily. Homodimer.

The protein resides in the cytoplasm. The catalysed reaction is tRNA(Pro) + L-proline + ATP = L-prolyl-tRNA(Pro) + AMP + diphosphate. Its function is as follows. Catalyzes the attachment of proline to tRNA(Pro) in a two-step reaction: proline is first activated by ATP to form Pro-AMP and then transferred to the acceptor end of tRNA(Pro). This chain is Proline--tRNA ligase, found in Chloroflexus aurantiacus (strain ATCC 29364 / DSM 637 / Y-400-fl).